A 351-amino-acid chain; its full sequence is Photosystem II D2 protein (351 aa).

A helical membrane pass occupies residues 39-59; sequence TAYLSIGGWLTGTTFVTSWYT. Residue His-116 participates in chlorophyll a binding. The helical transmembrane segment at 123 to 139 threads the bilayer; that stretch reads GFMLRQFEIARLVGIRP. Residues Gln-128 and Asn-141 each contribute to the pheophytin a site. Residues 151–164 traverse the membrane as a helical segment; it reads VFVSVFLMYPLGQS. Residue His-196 coordinates chlorophyll a. The chain crosses the membrane as a helical span at residues 206–226; the sequence is GALLCAIHGATVENTLFEDGE. A plastoquinone is bound by residues His-213 and Phe-260. His-213 contacts Fe cation. His-267 is a binding site for Fe cation. The helical transmembrane segment at 277–293 threads the bilayer; sequence GLWTSAIGIIGLALNLR.

This sequence belongs to the reaction center PufL/M/PsbA/D family. As to quaternary structure, PSII is composed of 1 copy each of membrane proteins PsbA, PsbB, PsbC, PsbD, PsbE, PsbF, PsbH, PsbI, PsbJ, PsbK, PsbL, PsbM, PsbT, PsbX, PsbY, PsbZ, Psb30/Ycf12, peripheral proteins PsbO, CyanoQ (PsbQ), PsbU, PsbV and a large number of cofactors. It forms dimeric complexes. The cofactor is The D1/D2 heterodimer binds P680, chlorophylls that are the primary electron donor of PSII, and subsequent electron acceptors. It shares a non-heme iron and each subunit binds pheophytin, quinone, additional chlorophylls, carotenoids and lipids. There is also a Cl(-1) ion associated with D1 and D2, which is required for oxygen evolution. The PSII complex binds additional chlorophylls, carotenoids and specific lipids..

The protein resides in the cellular thylakoid membrane. It carries out the reaction 2 a plastoquinone + 4 hnu + 2 H2O = 2 a plastoquinol + O2. Photosystem II (PSII) is a light-driven water:plastoquinone oxidoreductase that uses light energy to abstract electrons from H(2)O, generating O(2) and a proton gradient subsequently used for ATP formation. It consists of a core antenna complex that captures photons, and an electron transfer chain that converts photonic excitation into a charge separation. The D1/D2 (PsbA/PsbD) reaction center heterodimer binds P680, the primary electron donor of PSII as well as several subsequent electron acceptors. D2 is needed for assembly of a stable PSII complex. The chain is Photosystem II D2 protein from Synechococcus sp. (strain CC9311).